A 400-amino-acid chain; its full sequence is Argininosuccinate synthase (400 aa).

ATP-binding positions include 10–18 (AYSGGVDTS) and Ala-38. Tyr-89 provides a ligand contact to L-citrulline. Gly-119 contributes to the ATP binding site. L-aspartate is bound by residues Thr-121, Asn-125, and Asp-126. An L-citrulline-binding site is contributed by Asn-125. Residues Arg-129, Ser-177, Ser-186, Glu-262, and Tyr-274 each coordinate L-citrulline.

It belongs to the argininosuccinate synthase family. Type 1 subfamily. In terms of assembly, homotetramer.

The protein resides in the cytoplasm. It catalyses the reaction L-citrulline + L-aspartate + ATP = 2-(N(omega)-L-arginino)succinate + AMP + diphosphate + H(+). Its pathway is amino-acid biosynthesis; L-arginine biosynthesis; L-arginine from L-ornithine and carbamoyl phosphate: step 2/3. In Synechococcus elongatus (strain ATCC 33912 / PCC 7942 / FACHB-805) (Anacystis nidulans R2), this protein is Argininosuccinate synthase.